We begin with the raw amino-acid sequence, 467 residues long: MSNTTNQSWGGRFSEPTDAFVARFTASVDFDRRLYHHDIRGSIAHATMLERVGVLTADERDAILQGLGEIEQEIDAGTFEWSVDLEDVHMNLEARLTEKIGITGKKLHTGRSRNDQIATDIRLYLRDAIDVVDAELARLREGLIELAAREADTIMPGFTHLQTAQPVTFGHHLLAWQEMLARDHERLRDCRKRVNVMPLGAAALAGTTYPIDRHITAELLGFERPAENSLDAVSDRDFAIEFGAFASVLLMHMSRMSEELVLWTSAQFDFIDLPDRFCTGSSIMPQKKNPDVPELVRGKTGRVYGHLMGLLTLMKSQPLAYNKDNQEDKEPLFDTLDTVQGCLKAFADMVPAIEAKADNMFEAARKGFSTATDLADYLVRAGVAFRDAHEIVGQAVALGLREKKDLSEMTLDELRQFSDAIGEDVFEVLTLEGSVAARNHIGGTAPDQVRAAAQRARDALATLRQEA.

Belongs to the lyase 1 family. Argininosuccinate lyase subfamily.

It is found in the cytoplasm. It carries out the reaction 2-(N(omega)-L-arginino)succinate = fumarate + L-arginine. The protein operates within amino-acid biosynthesis; L-arginine biosynthesis; L-arginine from L-ornithine and carbamoyl phosphate: step 3/3. The chain is Argininosuccinate lyase from Chromohalobacter salexigens (strain ATCC BAA-138 / DSM 3043 / CIP 106854 / NCIMB 13768 / 1H11).